Reading from the N-terminus, the 127-residue chain is uncharacterized protein (127 aa).

Transmembrane regions (helical) follow at residues 20–42 (NMIWLYEVYMLYKTYTSYFFMSS), 54–76 (IYFCYCANFIALFRVIFGTIFVY), and 91–110 (WILIYLKGSINSLLYMASFT).

The protein localises to the membrane. It is found in the cytoplasm. This is an uncharacterized protein from Schizosaccharomyces pombe (strain 972 / ATCC 24843) (Fission yeast).